A 299-amino-acid polypeptide reads, in one-letter code: tRNA dimethylallyltransferase (299 aa).

An ATP-binding site is contributed by 11 to 18; sequence GPTAVGKT. Substrate is bound at residue 13-18; that stretch reads TAVGKT. Residues 36 to 39 form an interaction with substrate tRNA region; that stretch reads DSQQ.

The protein belongs to the IPP transferase family. In terms of assembly, monomer. It depends on Mg(2+) as a cofactor.

The catalysed reaction is adenosine(37) in tRNA + dimethylallyl diphosphate = N(6)-dimethylallyladenosine(37) in tRNA + diphosphate. Functionally, catalyzes the transfer of a dimethylallyl group onto the adenine at position 37 in tRNAs that read codons beginning with uridine, leading to the formation of N6-(dimethylallyl)adenosine (i(6)A). The polypeptide is tRNA dimethylallyltransferase (Streptococcus pyogenes serotype M1).